Here is a 449-residue protein sequence, read N- to C-terminus: 23S rRNA (uracil(1939)-C(5))-methyltransferase RlmD (449 aa).

One can recognise a TRAM domain in the interval 1 to 66 (MGRSRYHNKL…AKFDEAKVVE (66 aa)). [4Fe-4S] cluster-binding residues include cysteine 79, cysteine 85, cysteine 88, and cysteine 169. Positions 280, 309, 314, 330, 357, and 379 each coordinate S-adenosyl-L-methionine. The Nucleophile role is filled by cysteine 405.

This sequence belongs to the class I-like SAM-binding methyltransferase superfamily. RNA M5U methyltransferase family. RlmD subfamily.

It carries out the reaction uridine(1939) in 23S rRNA + S-adenosyl-L-methionine = 5-methyluridine(1939) in 23S rRNA + S-adenosyl-L-homocysteine + H(+). Its function is as follows. Catalyzes the formation of 5-methyl-uridine at position 1939 (m5U1939) in 23S rRNA. This chain is 23S rRNA (uracil(1939)-C(5))-methyltransferase RlmD, found in Francisella tularensis subsp. holarctica (strain LVS).